A 229-amino-acid chain; its full sequence is Potassium/proton antiporter CemA (229 aa).

4 helical membrane passes run 7–27, 106–126, 154–174, and 189–209; these read LASL…SLSF, IILH…YFFL, ILLV…ELMI, and IISG…KYWI.

The protein belongs to the CemA family.

The protein localises to the plastid. Its subcellular location is the chloroplast inner membrane. The catalysed reaction is K(+)(in) + H(+)(out) = K(+)(out) + H(+)(in). Contributes to K(+)/H(+) antiport activity by supporting proton efflux to control proton extrusion and homeostasis in chloroplasts in a light-dependent manner to modulate photosynthesis. Prevents excessive induction of non-photochemical quenching (NPQ) under continuous-light conditions. Indirectly promotes efficient inorganic carbon uptake into chloroplasts. The polypeptide is Potassium/proton antiporter CemA (Phalaenopsis aphrodite subsp. formosana (Moth orchid)).